A 287-amino-acid chain; its full sequence is Alpha-tubulin N-acetyltransferase 2 (287 aa).

Residues 2 to 193 form the N-acetyltransferase domain; sequence VEFAFDIKHL…NNFVLYEGFF (192 aa). Residues 127-140 and 163-172 contribute to the acetyl-CoA site; these read FYVH…GQGK and SNKMLAFMAK.

It belongs to the acetyltransferase ATAT1 family.

It is found in the midbody. Its subcellular location is the midbody ring. It catalyses the reaction L-lysyl-[alpha-tubulin] + acetyl-CoA = N(6)-acetyl-L-lysyl-[alpha-tubulin] + CoA + H(+). Its function is as follows. Specifically acetylates 'Lys-40' in alpha-tubulin on the lumenal side of microtubules. Promotes microtubule destabilization and accelerates microtubule dynamics; this activity may be independent of acetylation activity. Acetylates alpha-tubulin with a slow enzymatic rate, due to a catalytic site that is not optimized for acetyl transfer. Enters the microtubule through each end and diffuses quickly throughout the lumen of microtubules. Acetylates only long/old microtubules because of its slow acetylation rate since it does not have time to act on dynamically unstable microtubules before the enzyme is released. Main acetyltransferase responsible for alpha-tubulin 'Lys-40' acetylation in germline cells during the early stages of oogenesis. Required for normal egg chamber separation. This is Alpha-tubulin N-acetyltransferase 2 from Drosophila melanogaster (Fruit fly).